Consider the following 574-residue polypeptide: MATLVVNKLGAGVDSGRQGSRGTAVVKVLECGVCEDVFSLQGDKVPRLLLCGHTVCHDCLTRLPLHGRAIRCPFDRQVTDLGDSGVWGLKKNFALLELLERLQNGPIGQYGAAEESIGISGESIIRCDEDEAHLASVYCTVCATHLCSECSQVTHSTKTLAKHRRVPLADKPHEKTMCSQHQVHAIEFVCLEEGCQTSPLMCCVCKEYGKHQGHKHSVLEPEANQIRASILDMAHCIRTFTEEISDYSRKLVGIVQHIEGGEQIVEDGIGMAHTEHVPGTAENARSCIRAYFYDLHETLCRQEEMALSVVDAHVREKLIWLRQQQEDMTILLSEVSAACLHCEKTLQQDDCRVVLAKQEITRLLETLQKQQQQFTEVADHIQLDASIPVTFTKDNRVHIGPKMEIRVVTLGLDGAGKTTILFKLKQDEFMQPIPTIGFNVETVEYKNLKFTIWDVGGKHKLRPLWKHYYLNTQAVVFVVDSSHRDRISEAHSELAKLLTEKELRDALLLIFANKQDVAGALSVEEITELLSLHKLCCGRSWYIQGCDARSGMGLYEGLDWLSRQLVAAGVLDVA.

The segment at 31–76 (CGVCEDVFSLQGDKVPRLLLCGHTVCHDCLTRLPLHGRAIRCPFDR) adopts an RING-type; degenerate zinc-finger fold. A B box-type; degenerate zinc finger spans residues 122–168 (ESIIRCDEDEAHLASVYCTVCATHLCSECSQVTHSTKTLAKHRRVPL). Positions 352–379 (RVVLAKQEITRLLETLQKQQQQFTEVAD) form a coiled coil. An ARF-like region spans residues 390–574 (TFTKDNRVHI…LVAAGVLDVA (185 aa)). GTP is bound by residues 411-418 (GLDGAGKT), 454-458 (DVGGK), and 513-516 (NKQD).

It in the C-terminal section; belongs to the small GTPase superfamily. Arf family. As to quaternary structure, homodimer. Interacts with PSCD1. Interacts with UBE2D2. Interacts with TBK1 (via N-terminal kinase domain) and p62/SQSTM1. In terms of assembly, (Microbial infection) Interacts with human cytomegalovirus protein UL144; this interaction might cause autoubiquitination of TRAF6, leading to NF-kappa-B activation.

The protein localises to the cytoplasm. It is found in the endomembrane system. The protein resides in the golgi apparatus membrane. It localises to the lysosome membrane. It carries out the reaction S-ubiquitinyl-[E2 ubiquitin-conjugating enzyme]-L-cysteine + [acceptor protein]-L-lysine = [E2 ubiquitin-conjugating enzyme]-L-cysteine + N(6)-ubiquitinyl-[acceptor protein]-L-lysine.. It participates in protein modification; protein ubiquitination. Acts as an E3 ubiquitin-protein ligase. Plays an essential role in autophagy activation during viral infection. Mechanistically, activates TANK-binding kinase 1/TBK1 by facilitating its dimerization and ability to phosphorylate the selective autophagy receptor SQSTM1. In order to achieve this function, TRIM23 mediates 'Lys-27'-linked auto-ubiquitination of its ADP-ribosylation factor (ARF) domain to induce its GTPase activity and its recruitment to autophagosomes. Functionally, (Microbial infection) Mediates TRAF6 auto-ubiquitination in the presence of human cytomegalovirus protein UL144, resulting in the virally controlled activation of NF-kappa-B stimulation at early times of HCMV infection. This is E3 ubiquitin-protein ligase TRIM23 (TRIM23) from Homo sapiens (Human).